A 362-amino-acid chain; its full sequence is Phosphoserine aminotransferase (362 aa).

L-glutamate-binding residues include serine 9 and arginine 42. Residues 76–77 (GR), tryptophan 102, threonine 153, aspartate 174, and glutamine 197 contribute to the pyridoxal 5'-phosphate site. At lysine 198 the chain carries N6-(pyridoxal phosphate)lysine. 239-240 (NT) provides a ligand contact to pyridoxal 5'-phosphate.

This sequence belongs to the class-V pyridoxal-phosphate-dependent aminotransferase family. SerC subfamily. In terms of assembly, homodimer. It depends on pyridoxal 5'-phosphate as a cofactor.

It is found in the cytoplasm. It catalyses the reaction O-phospho-L-serine + 2-oxoglutarate = 3-phosphooxypyruvate + L-glutamate. It carries out the reaction 4-(phosphooxy)-L-threonine + 2-oxoglutarate = (R)-3-hydroxy-2-oxo-4-phosphooxybutanoate + L-glutamate. It participates in amino-acid biosynthesis; L-serine biosynthesis; L-serine from 3-phospho-D-glycerate: step 2/3. It functions in the pathway cofactor biosynthesis; pyridoxine 5'-phosphate biosynthesis; pyridoxine 5'-phosphate from D-erythrose 4-phosphate: step 3/5. Catalyzes the reversible conversion of 3-phosphohydroxypyruvate to phosphoserine and of 3-hydroxy-2-oxo-4-phosphonooxybutanoate to phosphohydroxythreonine. This is Phosphoserine aminotransferase from Escherichia fergusonii (strain ATCC 35469 / DSM 13698 / CCUG 18766 / IAM 14443 / JCM 21226 / LMG 7866 / NBRC 102419 / NCTC 12128 / CDC 0568-73).